The following is a 555-amino-acid chain: Hydroxylamine reductase (555 aa).

[4Fe-4S] cluster is bound by residues Cys-5, Cys-8, Cys-17, and Cys-23. Hybrid [4Fe-2O-2S] cluster-binding residues include His-248, Glu-272, Cys-316, Cys-408, Cys-436, Cys-461, Glu-496, and Lys-498. Cysteine persulfide is present on Cys-408.

Belongs to the HCP family. Requires [4Fe-4S] cluster as cofactor. The cofactor is hybrid [4Fe-2O-2S] cluster.

It localises to the cytoplasm. The enzyme catalyses A + NH4(+) + H2O = hydroxylamine + AH2 + H(+). In terms of biological role, catalyzes the reduction of hydroxylamine to form NH(3) and H(2)O. This Halothermothrix orenii (strain H 168 / OCM 544 / DSM 9562) protein is Hydroxylamine reductase.